A 209-amino-acid chain; its full sequence is Orotate phosphoribosyltransferase (209 aa).

Residues Arg96, Lys100, His102, and 122-130 (EDLISTGGS) each bind 5-phospho-alpha-D-ribose 1-diphosphate. Residue Ser126 participates in orotate binding.

Belongs to the purine/pyrimidine phosphoribosyltransferase family. PyrE subfamily. Homodimer. Mg(2+) serves as cofactor.

It carries out the reaction orotidine 5'-phosphate + diphosphate = orotate + 5-phospho-alpha-D-ribose 1-diphosphate. It participates in pyrimidine metabolism; UMP biosynthesis via de novo pathway; UMP from orotate: step 1/2. Its function is as follows. Catalyzes the transfer of a ribosyl phosphate group from 5-phosphoribose 1-diphosphate to orotate, leading to the formation of orotidine monophosphate (OMP). This Streptococcus pyogenes serotype M1 protein is Orotate phosphoribosyltransferase.